We begin with the raw amino-acid sequence, 1040 residues long: Multidrug resistance protein MdtB (1040 aa).

12 helical membrane passes run leucine 25–alanine 45, leucine 347–alanine 367, isoleucine 369–leucine 389, leucine 396–isoleucine 416, isoleucine 440–phenylalanine 460, phenylalanine 472–proline 492, tryptophan 537–isoleucine 557, leucine 863–valine 883, phenylalanine 888–alanine 908, isoleucine 910–isoleucine 930, isoleucine 968–valine 988, and isoleucine 998–isoleucine 1018.

It belongs to the resistance-nodulation-cell division (RND) (TC 2.A.6) family. MdtB subfamily. Part of a tripartite efflux system composed of MdtA, MdtB and MdtC. MdtB forms a heteromultimer with MdtC.

It localises to the cell inner membrane. In Salmonella gallinarum (strain 287/91 / NCTC 13346), this protein is Multidrug resistance protein MdtB.